A 577-amino-acid polypeptide reads, in one-letter code: MSSTSSDRPYDPLAPENEGVASSDVESTDSGEIRSYGPEEVLKNGSQIKDKGPALSKNSTQTSAVESAVAANRRLSKILTNTVDEPDVLEVDYSKCPPMGGGRPFPPTLPEKTQFEVTFDGPNDPLHPFNWPLRKKVMLCIILCLNCISITMGSSIFATGIRQICEIYHVIPVVAILGITLYVLGFAASPVIYAPLSEIYGRRGVLVISSFGFALFNFAVATAKDLQTIMICRFFAGFIGAAPLAVVPAAFADMFDTNIRGKAICLFSLGVFVGPILAPVIGSYITQHTTWRWLEYVIACFASAIFVAILFFFEESHHPSILVGKAKELRKLTGNWGIHAAHEDVELSVKEIAEKTITRPIIMLFTEPLLLIVTIYNSFVYGILYLLLEAYPIVFEQGYGFHTNGELPYISLIIGMAICGAFIWWMDEDYLRRYRKKGGLVPEARLLPMVVAGIVFPIGILWFCWTGNYPHKIHWIVPTIAGAFTGFGLIGIFLPCLNYIIESYLLIAASAVAANTFMRSGFGAAFPLFAGYMFNGMGVNYAGLLLGLLAVAMIPVPLLFLKYGPGIRKRSKYAYSL.

The tract at residues 1–63 (MSSTSSDRPY…ALSKNSTQTS (63 aa)) is disordered. Residues Asn44 and Asn58 are each glycosylated (N-linked (GlcNAc...) asparagine). Helical transmembrane passes span 137-157 (VMLC…SSIF), 167-187 (IYHV…LGFA), 204-224 (GVLV…ATAK), 234-254 (FFAG…FADM), 263-283 (AICL…VIGS), 293-313 (WLEY…LFFF), 368-388 (PLLL…YLLL), 406-426 (ELPY…IWWM), 446-466 (LLPM…FCWT), 475-495 (WIVP…IFLP), 504-526 (YLLI…GAAF), and 541-561 (YAGL…LLFL).

It belongs to the major facilitator superfamily. DHA1 family. Polyamines/proton antiporter (TC 2.A.1.2.16) subfamily.

It localises to the cell membrane. Functionally, multidrug resistance transporter involved in resistance to azole antifungal drugs such as the imidazoles miconazole, ketoconazole, and tioconazole; as well as the triazoles itraconazole and fluconazole. Also plays a role in the resistance to other antifungal drug families such as the polyene amphotericin B, the pyrimide analog flucytosine, the fungicide mancozeb, and the polyamine spermine. Decreases the intracellular accumulation of clotrimazole by mediating its extrusion from cells. Plays a role in biofilm formation. The protein is Multidrug transporter TPO1_2 of Candida glabrata (strain ATCC 2001 / BCRC 20586 / JCM 3761 / NBRC 0622 / NRRL Y-65 / CBS 138) (Yeast).